The chain runs to 294 residues: Nucleotide-binding protein CA_C0511 (294 aa).

An ATP-binding site is contributed by 8–15; that stretch reads GLSGAGKT. 59–62 lines the GTP pocket; sequence DIRG.

Belongs to the RapZ-like family.

Functionally, displays ATPase and GTPase activities. The polypeptide is Nucleotide-binding protein CA_C0511 (Clostridium acetobutylicum (strain ATCC 824 / DSM 792 / JCM 1419 / IAM 19013 / LMG 5710 / NBRC 13948 / NRRL B-527 / VKM B-1787 / 2291 / W)).